A 283-amino-acid chain; its full sequence is Pantothenate synthetase (283 aa).

30–37 serves as a coordination point for ATP; sequence MGNLHDGH. The active-site Proton donor is His37. Position 61 (Gln61) interacts with (R)-pantoate. Residue Gln61 coordinates beta-alanine. 149-152 is a binding site for ATP; sequence GEKD. Residue Gln155 coordinates (R)-pantoate. ATP is bound at residue 186-189; sequence LSSR.

Belongs to the pantothenate synthetase family. Homodimer.

It is found in the cytoplasm. The catalysed reaction is (R)-pantoate + beta-alanine + ATP = (R)-pantothenate + AMP + diphosphate + H(+). The protein operates within cofactor biosynthesis; (R)-pantothenate biosynthesis; (R)-pantothenate from (R)-pantoate and beta-alanine: step 1/1. In terms of biological role, catalyzes the condensation of pantoate with beta-alanine in an ATP-dependent reaction via a pantoyl-adenylate intermediate. The chain is Pantothenate synthetase from Shigella sonnei (strain Ss046).